Consider the following 247-residue polypeptide: DNA polymerase sliding clamp (247 aa).

Belongs to the PCNA family. As to quaternary structure, homotrimer. The subunits circularize to form a toroid; DNA passes through its center. Replication factor C (RFC) is required to load the toroid on the DNA.

Its function is as follows. Sliding clamp subunit that acts as a moving platform for DNA processing. Responsible for tethering the catalytic subunit of DNA polymerase and other proteins to DNA during high-speed replication. The polypeptide is DNA polymerase sliding clamp (Methanocorpusculum labreanum (strain ATCC 43576 / DSM 4855 / Z)).